The primary structure comprises 425 residues: Histidine--tRNA ligase (425 aa).

It belongs to the class-II aminoacyl-tRNA synthetase family. Homodimer.

The protein localises to the cytoplasm. The catalysed reaction is tRNA(His) + L-histidine + ATP = L-histidyl-tRNA(His) + AMP + diphosphate + H(+). This chain is Histidine--tRNA ligase, found in Histophilus somni (strain 2336) (Haemophilus somnus).